The following is an 88-amino-acid chain: Putative regulatory protein AM1_5498 (88 aa).

Belongs to the RemA family.

The protein is Putative regulatory protein AM1_5498 of Acaryochloris marina (strain MBIC 11017).